We begin with the raw amino-acid sequence, 494 residues long: Glycerol kinase (494 aa).

Thr12 is a binding site for ADP. Residues Thr12, Thr13, and Ser14 each contribute to the ATP site. Sn-glycerol 3-phosphate is bound at residue Thr12. Arg16 contacts ADP. Arg82, Glu83, Tyr135, and Asp244 together coordinate sn-glycerol 3-phosphate. Residues Arg82, Glu83, Tyr135, Asp244, and Gln245 each coordinate glycerol. Residues Thr266 and Gly309 each coordinate ADP. Residues Thr266, Gly309, Gln313, and Gly409 each contribute to the ATP site. Residues Gly409 and Asn413 each coordinate ADP.

The protein belongs to the FGGY kinase family.

The catalysed reaction is glycerol + ATP = sn-glycerol 3-phosphate + ADP + H(+). It functions in the pathway polyol metabolism; glycerol degradation via glycerol kinase pathway; sn-glycerol 3-phosphate from glycerol: step 1/1. Its activity is regulated as follows. Inhibited by fructose 1,6-bisphosphate (FBP). Key enzyme in the regulation of glycerol uptake and metabolism. Catalyzes the phosphorylation of glycerol to yield sn-glycerol 3-phosphate. The protein is Glycerol kinase of Alteromonas mediterranea (strain DSM 17117 / CIP 110805 / LMG 28347 / Deep ecotype).